The following is a 431-amino-acid chain: 3-phosphoshikimate 1-carboxyvinyltransferase (431 aa).

Residues K26, S27, and R31 each coordinate 3-phosphoshikimate. K26 contacts phosphoenolpyruvate. The phosphoenolpyruvate site is built by G100 and R129. 3-phosphoshikimate contacts are provided by S175, S176, Q177, D308, and Q335. Q177 is a phosphoenolpyruvate binding site. D308 acts as the Proton acceptor in catalysis. Phosphoenolpyruvate contacts are provided by R339, R381, and K412.

Belongs to the EPSP synthase family. As to quaternary structure, monomer.

The protein localises to the cytoplasm. The catalysed reaction is 3-phosphoshikimate + phosphoenolpyruvate = 5-O-(1-carboxyvinyl)-3-phosphoshikimate + phosphate. It functions in the pathway metabolic intermediate biosynthesis; chorismate biosynthesis; chorismate from D-erythrose 4-phosphate and phosphoenolpyruvate: step 6/7. In terms of biological role, catalyzes the transfer of the enolpyruvyl moiety of phosphoenolpyruvate (PEP) to the 5-hydroxyl of shikimate-3-phosphate (S3P) to produce enolpyruvyl shikimate-3-phosphate and inorganic phosphate. The chain is 3-phosphoshikimate 1-carboxyvinyltransferase from Opitutus terrae (strain DSM 11246 / JCM 15787 / PB90-1).